The chain runs to 292 residues: uncharacterized protein (292 aa).

An N-terminal signal peptide occupies residues 1–21 (MNSNSNKKRDPARFPAGVAQG). The interval 1–30 (MNSNSNKKRDPARFPAGVAQGCSTTRAGDL) is disordered.

This is an uncharacterized protein from Treponema pallidum (strain Nichols).